Here is a 374-residue protein sequence, read N- to C-terminus: uncharacterized protein (374 aa).

An N-terminal signal peptide occupies residues 1–23; that stretch reads MDSKWFFIVLISFLLVLPSIVTP. The interval 66-374 is disordered; that stretch reads SSSSSSSSSS…SSSSSSSGEN (309 aa).

It localises to the secreted. This is an uncharacterized protein from Dictyostelium discoideum (Social amoeba).